The sequence spans 357 residues: IGF-like family receptor 1 (357 aa).

An N-terminal signal peptide occupies residues 1-22; the sequence is MGPLRLLPTAVLLLAQAAPWEA. Residues 23 to 160 are Extracellular-facing; sequence SQHCGRLEYW…HKAPQQAWPS (138 aa). The tract at residues 100 to 147 is disordered; it reads IPSGSRGGTGRPCREPVPNKEPCPLTPGKSSILSSQEPSSPGIPSVSW. The span at 129 to 139 shows a compositional bias: low complexity; the sequence is SSILSSQEPSS. A helical membrane pass occupies residues 161-181; the sequence is LSFALFLVLVLLVTSAIILLA. At 182–357 the chain is on the cytoplasmic side; sequence LQRHHRRLDQ…KLGSSGACLA (176 aa).

It localises to the cell membrane. Functionally, probable cell membrane receptor for the IGF-like family protein IGFL. This is IGF-like family receptor 1 (IGFLR1) from Bos taurus (Bovine).